The chain runs to 115 residues: Meiotically up-regulated gene 168 protein (115 aa).

The tract at residues 82–115 (SVSPVHTKAEEPGLGLTPMNSADFSNKIASRYRS) is disordered. A compositionally biased stretch (polar residues) spans 99 to 109 (PMNSADFSNKI).

It is found in the nucleus. Functionally, has a role in meiosis. The polypeptide is Meiotically up-regulated gene 168 protein (mug168) (Schizosaccharomyces pombe (strain 972 / ATCC 24843) (Fission yeast)).